We begin with the raw amino-acid sequence, 164 residues long: Ribonuclease P protein component 2 (164 aa).

This sequence belongs to the eukaryotic/archaeal RNase P protein component 2 family. In terms of assembly, consists of a catalytic RNA component and at least 4-5 protein subunits.

The protein localises to the cytoplasm. It catalyses the reaction Endonucleolytic cleavage of RNA, removing 5'-extranucleotides from tRNA precursor.. Part of ribonuclease P, a protein complex that generates mature tRNA molecules by cleaving their 5'-ends. The protein is Ribonuclease P protein component 2 of Halobacterium salinarum (strain ATCC 29341 / DSM 671 / R1).